A 153-amino-acid polypeptide reads, in one-letter code: 6,7-dimethyl-8-ribityllumazine synthase (153 aa).

5-amino-6-(D-ribitylamino)uracil-binding positions include F22, 56 to 58 (AFE), and 80 to 82 (AVI). 85–86 (GT) serves as a coordination point for (2S)-2-hydroxy-3-oxobutyl phosphate. Catalysis depends on H88, which acts as the Proton donor. Position 113 (F113) interacts with 5-amino-6-(D-ribitylamino)uracil. R127 contributes to the (2S)-2-hydroxy-3-oxobutyl phosphate binding site.

This sequence belongs to the DMRL synthase family. In terms of assembly, forms an icosahedral capsid composed of 60 subunits, arranged as a dodecamer of pentamers.

The enzyme catalyses (2S)-2-hydroxy-3-oxobutyl phosphate + 5-amino-6-(D-ribitylamino)uracil = 6,7-dimethyl-8-(1-D-ribityl)lumazine + phosphate + 2 H2O + H(+). The protein operates within cofactor biosynthesis; riboflavin biosynthesis; riboflavin from 2-hydroxy-3-oxobutyl phosphate and 5-amino-6-(D-ribitylamino)uracil: step 1/2. In terms of biological role, catalyzes the formation of 6,7-dimethyl-8-ribityllumazine by condensation of 5-amino-6-(D-ribitylamino)uracil with 3,4-dihydroxy-2-butanone 4-phosphate. This is the penultimate step in the biosynthesis of riboflavin. This chain is 6,7-dimethyl-8-ribityllumazine synthase, found in Hydrogenovibrio crunogenus (strain DSM 25203 / XCL-2) (Thiomicrospira crunogena).